A 129-amino-acid polypeptide reads, in one-letter code: Large ribosomal subunit protein bL12 (129 aa).

Residues threonine 94 to threonine 113 form a disordered region.

The protein belongs to the bacterial ribosomal protein bL12 family. In terms of assembly, homodimer. Part of the ribosomal stalk of the 50S ribosomal subunit. Forms a multimeric L10(L12)X complex, where L10 forms an elongated spine to which 2 to 4 L12 dimers bind in a sequential fashion. Binds GTP-bound translation factors.

Its function is as follows. Forms part of the ribosomal stalk which helps the ribosome interact with GTP-bound translation factors. Is thus essential for accurate translation. The chain is Large ribosomal subunit protein bL12 from Chlamydia pneumoniae (Chlamydophila pneumoniae).